A 364-amino-acid chain; its full sequence is CCA-adding enzyme (364 aa).

ATP is bound by residues Gly19 and Arg22. CTP contacts are provided by Gly19 and Arg22. Positions 32 and 34 each coordinate Mg(2+). ATP contacts are provided by Arg102, Arg148, and Arg151. The CTP site is built by Arg102, Arg148, and Arg151.

Belongs to the tRNA nucleotidyltransferase/poly(A) polymerase family. Bacterial CCA-adding enzyme type 2 subfamily. Requires Mg(2+) as cofactor.

The catalysed reaction is a tRNA precursor + 2 CTP + ATP = a tRNA with a 3' CCA end + 3 diphosphate. The enzyme catalyses a tRNA with a 3' CCA end + 2 CTP + ATP = a tRNA with a 3' CCACCA end + 3 diphosphate. In terms of biological role, catalyzes the addition and repair of the essential 3'-terminal CCA sequence in tRNAs without using a nucleic acid template. Adds these three nucleotides in the order of C, C, and A to the tRNA nucleotide-73, using CTP and ATP as substrates and producing inorganic pyrophosphate. tRNA 3'-terminal CCA addition is required both for tRNA processing and repair. Also involved in tRNA surveillance by mediating tandem CCA addition to generate a CCACCA at the 3' terminus of unstable tRNAs. While stable tRNAs receive only 3'-terminal CCA, unstable tRNAs are marked with CCACCA and rapidly degraded. The protein is CCA-adding enzyme of Bordetella pertussis (strain Tohama I / ATCC BAA-589 / NCTC 13251).